Reading from the N-terminus, the 375-residue chain is Alcohol dehydrogenase 1 (375 aa).

S2 bears the N-acetylserine mark. Zn(2+) is bound by residues C47, H68, C98, C101, C104, C112, and C175. NAD(+)-binding positions include 200–205, D224, K229, 293–295, and R370; these read GLGGVG and LGV.

It belongs to the zinc-containing alcohol dehydrogenase family. Class-I subfamily. Homodimer. Zn(2+) is required as a cofactor.

The protein localises to the cytoplasm. The catalysed reaction is a primary alcohol + NAD(+) = an aldehyde + NADH + H(+). It catalyses the reaction a secondary alcohol + NAD(+) = a ketone + NADH + H(+). The protein is Alcohol dehydrogenase 1 (ADH1) of Apteryx australis (Southern brown kiwi).